A 157-amino-acid chain; its full sequence is Large ribosomal subunit protein uL15 (157 aa).

The segment at 1-40 is disordered; that stretch reads MKLHELSDNPGATKKRMRIGRGPGSGKGKMGGRGIKGQKS. The segment covering 21–35 has biased composition (gly residues); it reads RGPGSGKGKMGGRGI.

This sequence belongs to the universal ribosomal protein uL15 family. As to quaternary structure, part of the 50S ribosomal subunit.

Functionally, binds to the 23S rRNA. This chain is Large ribosomal subunit protein uL15, found in Ruegeria pomeroyi (strain ATCC 700808 / DSM 15171 / DSS-3) (Silicibacter pomeroyi).